Reading from the N-terminus, the 225-residue chain is Putative N-acetylmannosamine-6-phosphate 2-epimerase (225 aa).

It belongs to the NanE family.

It carries out the reaction an N-acyl-D-glucosamine 6-phosphate = an N-acyl-D-mannosamine 6-phosphate. It participates in amino-sugar metabolism; N-acetylneuraminate degradation; D-fructose 6-phosphate from N-acetylneuraminate: step 3/5. In terms of biological role, converts N-acetylmannosamine-6-phosphate (ManNAc-6-P) to N-acetylglucosamine-6-phosphate (GlcNAc-6-P). The protein is Putative N-acetylmannosamine-6-phosphate 2-epimerase of Vibrio vulnificus (strain CMCP6).